Reading from the N-terminus, the 888-residue chain is Alanine--tRNA ligase (888 aa).

Positions 573, 577, 676, and 680 each coordinate Zn(2+).

This sequence belongs to the class-II aminoacyl-tRNA synthetase family. It depends on Zn(2+) as a cofactor.

The protein localises to the cytoplasm. It carries out the reaction tRNA(Ala) + L-alanine + ATP = L-alanyl-tRNA(Ala) + AMP + diphosphate. Functionally, catalyzes the attachment of alanine to tRNA(Ala) in a two-step reaction: alanine is first activated by ATP to form Ala-AMP and then transferred to the acceptor end of tRNA(Ala). Also edits incorrectly charged Ser-tRNA(Ala) and Gly-tRNA(Ala) via its editing domain. This chain is Alanine--tRNA ligase, found in Corynebacterium glutamicum (strain ATCC 13032 / DSM 20300 / JCM 1318 / BCRC 11384 / CCUG 27702 / LMG 3730 / NBRC 12168 / NCIMB 10025 / NRRL B-2784 / 534).